The sequence spans 1051 residues: Inactive tyrosine-protein kinase 7 (1051 aa).

Residues 1-22 (MAALRALLLLLAVGAQAAIRFA) form the signal peptide. Ig-like C2-type domains follow at residues 23–105 (KEPY…ANAS), 115–204 (SVVL…DNFT), 213–298 (PQAV…KATL), 308–388 (PFSP…LSIT), 393–472 (PKWV…GSIE), 487–566 (PPPQ…ATVQ), and 573–661 (VTFK…AFLY). The Extracellular portion of the chain corresponds to 23–685 (KEPYSQDALH…SHTPYKMIQT (663 aa)). Cys40 and Cys88 are disulfide-bonded. Asn103 carries N-linked (GlcNAc...) asparagine glycosylation. Cys137 and Cys187 form a disulfide bridge. 3 N-linked (GlcNAc...) asparagine glycosylation sites follow: Asn202, Asn255, and Asn264. 5 disulfide bridges follow: Cys234–Cys282, Cys326–Cys372, Cys414–Cys462, Cys505–Cys551, and Cys594–Cys645. N-linked (GlcNAc...) asparagine glycans are attached at residues Asn444, Asn548, and Asn627. Residues 686 to 706 (IGLSVGAAVAYIIIVLGLMFY) form a helical membrane-spanning segment. The Cytoplasmic portion of the chain corresponds to 707–1051 (CKKRRKAKRL…LGDSPADSKA (345 aa)). The 272-residue stretch at 777–1048 (LQTITTLGRG…AAALGDSPAD (272 aa)) folds into the Protein kinase; inactive domain.

This sequence belongs to the protein kinase superfamily. Tyr protein kinase family. Insulin receptor subfamily. As to expression, expressed in bone marrow, spleen, bursa, thymus and brain. Weakly expressed in fibroblasts. Also expressed in embryonic liver.

The protein localises to the membrane. Its function is as follows. Inactive tyrosine kinase involved in Wnt signaling. pathway. This Gallus gallus (Chicken) protein is Inactive tyrosine-protein kinase 7 (PTK7).